The sequence spans 437 residues: MTQQENDTQKRFFNDNLQIVDDAIFNAMRGEFERQQHEIELIASENIVSRAVLEAQGSVLTNKYAEGYPRKRYYGGCQFVDLVEDLAIERAKQLFGAAFANVQPNSGSQMNQAVFLALLQPGDTFMGLDLNAGGHLTHGSSVNMSGKWFDVVSYGVRQEDQIIDMDEVERLAKERKPKLIIAGGSSYPRFWDWERFREIADEIGAHLLVDMSHIAGLVAGGVHPSPVPHAHIVTTTTHKSLRGPRGGLILTNDEALSKKINSAIFPGLQGGPLMHVIAAKAVAFGEALHPSFKSYSVNVVANAKTLAKTLQSNGFNIVSGGTDNHLLLVDLRSKNLTGKRAELALGRAHITCNKNGIPFDPETPSITSGIRLGSPAATTRGFLEKEFVQVAHLIAEVLDGLRNAKSDEDNHAVEMAVKKKVEDITNQFPLYSYLSTR.

(6S)-5,6,7,8-tetrahydrofolate contacts are provided by residues Leu-130 and 134 to 136 (GHL). An N6-(pyridoxal phosphate)lysine modification is found at Lys-239.

It belongs to the SHMT family. As to quaternary structure, homodimer. Requires pyridoxal 5'-phosphate as cofactor.

The protein localises to the cytoplasm. The catalysed reaction is (6R)-5,10-methylene-5,6,7,8-tetrahydrofolate + glycine + H2O = (6S)-5,6,7,8-tetrahydrofolate + L-serine. It participates in one-carbon metabolism; tetrahydrofolate interconversion. It functions in the pathway amino-acid biosynthesis; glycine biosynthesis; glycine from L-serine: step 1/1. In terms of biological role, catalyzes the reversible interconversion of serine and glycine with tetrahydrofolate (THF) serving as the one-carbon carrier. This reaction serves as the major source of one-carbon groups required for the biosynthesis of purines, thymidylate, methionine, and other important biomolecules. Also exhibits THF-independent aldolase activity toward beta-hydroxyamino acids, producing glycine and aldehydes, via a retro-aldol mechanism. This is Serine hydroxymethyltransferase from Bartonella tribocorum (strain CIP 105476 / IBS 506).